Reading from the N-terminus, the 177-residue chain is Ferritin heavy chain, oocyte isoform (177 aa).

In terms of domain architecture, Ferritin-like diiron spans 7–156 (QNFHQECEAA…DHITNLRRMG (150 aa)). Fe cation-binding residues include Glu-24, Glu-59, His-62, Glu-104, and Gln-138.

Belongs to the ferritin family. As to quaternary structure, oligomer of 24 subunits. There are two types of subunits: L (light) chain and H (heavy) chain. The functional molecule is roughly spherical and contains a central cavity into which the insoluble mineral iron core is deposited.

The protein resides in the cytoplasm. It carries out the reaction 4 Fe(2+) + O2 + 4 H(+) = 4 Fe(3+) + 2 H2O. Stores iron in a soluble, non-toxic, readily available form. Important for iron homeostasis. Has ferroxidase activity. Iron is taken up in the ferrous form and deposited as ferric hydroxides after oxidation. The sequence is that of Ferritin heavy chain, oocyte isoform from Xenopus laevis (African clawed frog).